The primary structure comprises 101 residues: YEQCIAHYESPEAAVAVVHALPRINRMVLCYLIRFLQVFVQPANVAITKMDVSNLAMVMAPNCLRCQSDDPRVIFENTRKEMSFLRVLIQHLDTSFMEGVL.

A Rho-GAP domain is found at 1–96 (YEQCIAHYES…VLIQHLDTSF (96 aa)).

As to expression, preoptic area and testis.

This Rattus norvegicus (Rat) protein is Rho GTPase-activating protein 39 (Arhgap39).